The following is a 1406-amino-acid chain: Sterol 3-beta-glucosyltransferase (1406 aa).

Residues 83–231 are disordered; it reads ARFDESSDSD…IHSSHESSTS (149 aa). Over residues 110 to 128 the composition is skewed to polar residues; it reads GSSNPVNSQTEQRSGSQTS. The segment covering 209–231 has biased composition (low complexity); the sequence is SAGRSQNSSQESSIHSSHESSTS. Positions 236-286 constitute a GRAM 1 domain; sequence RLMEMFDFNKPEKVLVEYACSLLQSMLLQGYMYVTEGHICFYAYLPRKSTV. A PH domain is found at 286–385; it reads VAIKSGYLHK…WVKALQKVIF (100 aa). Disordered regions lie at residues 457–558 and 576–622; these read ASGH…AESA and LDKR…DGKP. The segment covering 468–478 has biased composition (basic and acidic residues); that stretch reads HADRSPRSDRT. Composition is skewed to polar residues over residues 490–499 and 531–548; these read GTSQPGNGSA and SESI…SAVW. A compositionally biased stretch (basic and acidic residues) spans 576-587; it reads LDKRACSDERSG. Positions 730–796 constitute a GRAM 2 domain; sequence DRFRAHFALP…KDVENVEKEK (67 aa). UDP-alpha-D-glucose is bound by residues Ser-917, Arg-918, Asp-920, Ala-1220, His-1222, His-1235, Gly-1239, Thr-1240, Asp-1259, and Gln-1260. The disordered stretch occupies residues 1334–1406; it reads QRSIASSTPF…LTNSIHGAGR (73 aa). Low complexity predominate over residues 1336–1349; it reads SIASSTPFSPTPSA. Residues 1355-1375 are compositionally biased toward acidic residues; that stretch reads QGDDDVEDSEEWTFVGDDNEM. Over residues 1376-1387 the composition is skewed to basic and acidic residues; the sequence is DMSRRMRDRAIS. The segment covering 1397–1406 has biased composition (polar residues); the sequence is LTNSIHGAGR.

It belongs to the glycosyltransferase 28 family.

The protein resides in the cytoplasm. It localises to the preautophagosomal structure membrane. The enzyme catalyses a sterol + UDP-alpha-D-glucose = a sterol 3-beta-D-glucoside + UDP + H(+). The catalysed reaction is ergosterol + UDP-alpha-D-glucose = ergosteryl 3-beta-D-glucoside + UDP + H(+). Sterol glycosyltransferase responsible for the glycosylation of ergosterol to form ergosterol-glucoside. The protein is Sterol 3-beta-glucosyltransferase of Aspergillus clavatus (strain ATCC 1007 / CBS 513.65 / DSM 816 / NCTC 3887 / NRRL 1 / QM 1276 / 107).